We begin with the raw amino-acid sequence, 715 residues long: Putative membrane protein IgaA homolog (715 aa).

The next 5 membrane-spanning stretches (helical) occupy residues 2–22 (STIV…GLLW), 214–234 (EACA…GPTV), 235–255 (TLPW…WYLF), 349–369 (NLTL…YVPL), and 663–683 (ATSL…VLLI).

This sequence belongs to the IgaA family.

The protein resides in the cell inner membrane. This chain is Putative membrane protein IgaA homolog, found in Yersinia pestis.